The following is a 285-amino-acid chain: MATKLQDGNTPCLAATPSEPRPTVLVFDSGVGGLSVYDEIRHLLPDLHYIYAFDNVAFPYGEKSEVFIVERVVEIVTAVQERYPLALAVVACNTASTVSLPALREKFDFPVVGVVPAIKPAARLTANGIVGLLATRGTVKRSYTHELIARFANECQIEMLGSAEMVELAEAKLHGEDVSLDALKRILRPWLRMKEPPDTVVLGCTHFPLLQEELLQVLPEGTRLVDSGAAIARRTAWLLEHEAPDAKSADANIAFCMAMTPEAEQLLPVLQRYGFETLEKLAVLG.

Substrate-binding positions include 28 to 29 and 60 to 61; these read DS and YG. C92 serves as the catalytic Proton donor/acceptor. 93-94 lines the substrate pocket; it reads NT. Residue C204 is the Proton donor/acceptor of the active site. 205-206 contacts substrate; that stretch reads TH.

Belongs to the aspartate/glutamate racemases family.

The catalysed reaction is L-glutamate = D-glutamate. The protein operates within cell wall biogenesis; peptidoglycan biosynthesis. In terms of biological role, provides the (R)-glutamate required for cell wall biosynthesis. This is Glutamate racemase from Escherichia coli (strain UTI89 / UPEC).